The primary structure comprises 666 residues: DNA mismatch repair protein MutL (666 aa).

It belongs to the DNA mismatch repair MutL/HexB family.

This protein is involved in the repair of mismatches in DNA. It is required for dam-dependent methyl-directed DNA mismatch repair. May act as a 'molecular matchmaker', a protein that promotes the formation of a stable complex between two or more DNA-binding proteins in an ATP-dependent manner without itself being part of a final effector complex. This Clostridium botulinum (strain Langeland / NCTC 10281 / Type F) protein is DNA mismatch repair protein MutL.